The following is a 360-amino-acid chain: Dihydroorotate dehydrogenase (quinone) (360 aa).

Residues 60 to 64 (AGFDK) and Thr84 contribute to the FMN site. Lys64 is a substrate binding site. Residue 109 to 113 (NRMGF) participates in substrate binding. 2 residues coordinate FMN: Asn137 and Asn168. Asn168 provides a ligand contact to substrate. Ser171 acts as the Nucleophile in catalysis. Asn173 contacts substrate. 2 residues coordinate FMN: Lys213 and Ser241. 242 to 243 (NT) serves as a coordination point for substrate. Residues Gly264, Gly293, and 314-315 (YS) each bind FMN.

This sequence belongs to the dihydroorotate dehydrogenase family. Type 2 subfamily. As to quaternary structure, monomer. It depends on FMN as a cofactor.

The protein localises to the cell membrane. The enzyme catalyses (S)-dihydroorotate + a quinone = orotate + a quinol. Its pathway is pyrimidine metabolism; UMP biosynthesis via de novo pathway; orotate from (S)-dihydroorotate (quinone route): step 1/1. Its function is as follows. Catalyzes the conversion of dihydroorotate to orotate with quinone as electron acceptor. In Bartonella tribocorum (strain CIP 105476 / IBS 506), this protein is Dihydroorotate dehydrogenase (quinone).